A 516-amino-acid chain; its full sequence is Radial spoke head protein 3 homolog A (516 aa).

Disordered stretches follow at residues methionine 1–alanine 45, serine 120–serine 139, and proline 190–glycine 233. A compositionally biased stretch (basic residues) spans alanine 12–alanine 25. The span at serine 120–threonine 129 shows a compositional bias: polar residues. Positions glutamine 208–lysine 217 are enriched in basic residues. Residues arginine 218–glycine 233 show a composition bias toward basic and acidic residues. A Phosphothreonine; by MAPK1 modification is found at threonine 270. Positions tyrosine 333–valine 369 form a coiled coil. The interval glutamate 459 to glutamate 516 is disordered. Over residues glutamine 465–threonine 486 the composition is skewed to polar residues. The segment covering glutamine 502 to glutamate 516 has biased composition (basic and acidic residues).

Belongs to the flagellar radial spoke RSP3 family. As to quaternary structure, may be a component of axonemal radial spokes. Interacts with IQUB. Interacts with phosphorylated MAPK1. Interacts with MEK1. Interacts with PKA regulatory subunits PRKAR1A and PRKAR1B. Interacts with RSPH1. Interacts with RSPH4A. Interacts with RSPH6A. Interacts with RSPH9. Interacts with CFAP61. Interacts with LRRC23.

Its subcellular location is the cytoplasm. It localises to the cytoskeleton. The protein localises to the cilium axoneme. The protein resides in the flagellum axoneme. In terms of biological role, may function as part of axonemal radial spoke complexes that play an important part in the motility of sperm and cilia. Functions as a protein kinase A-anchoring protein that scaffolds the cAMP-dependent protein kinase holoenzyme. May serve as a point of convergence for MAPK and PKA signaling in cilia. This chain is Radial spoke head protein 3 homolog A (Rsph3a), found in Mus musculus (Mouse).